The sequence spans 435 residues: ATP-dependent protease ATPase subunit HslU (435 aa).

ATP is bound by residues I18, 60 to 65 (GVGKTE), D248, E313, and R385.

The protein belongs to the ClpX chaperone family. HslU subfamily. In terms of assembly, a double ring-shaped homohexamer of HslV is capped on each side by a ring-shaped HslU homohexamer. The assembly of the HslU/HslV complex is dependent on binding of ATP.

Its subcellular location is the cytoplasm. Functionally, ATPase subunit of a proteasome-like degradation complex; this subunit has chaperone activity. The binding of ATP and its subsequent hydrolysis by HslU are essential for unfolding of protein substrates subsequently hydrolyzed by HslV. HslU recognizes the N-terminal part of its protein substrates and unfolds these before they are guided to HslV for hydrolysis. The protein is ATP-dependent protease ATPase subunit HslU of Ruegeria pomeroyi (strain ATCC 700808 / DSM 15171 / DSS-3) (Silicibacter pomeroyi).